Here is a 206-residue protein sequence, read N- to C-terminus: TPR repeat-containing protein YrrB (206 aa).

TPR repeat units lie at residues 1-23 (MQEG…NKED), 24-57 (AIPY…DSSA), 59-91 (TAYY…GMEN), 93-125 (DLFY…NEND), 127-159 (EARF…DPGH), and 160-193 (ADAF…QPDH).

Monomer.

Functionally, could be an interacting mediator in the complex formation among RNA sulfuration components, RNA processing components, and aminoacyl-tRNA synthetases. This is TPR repeat-containing protein YrrB (yrrB) from Bacillus subtilis (strain 168).